The primary structure comprises 122 residues: UPF0344 protein BPUM_1008 (122 aa).

4 consecutive transmembrane segments (helical) span residues 5-25, 33-53, 60-80, and 93-113; these read LHIT…ALAG, IVHM…VELY, IPGF…VIGF, and SVTG…LLGL.

This sequence belongs to the UPF0344 family.

It is found in the cell membrane. The protein is UPF0344 protein BPUM_1008 of Bacillus pumilus (strain SAFR-032).